A 355-amino-acid polypeptide reads, in one-letter code: Probable nitronate monooxygenase (355 aa).

Residues N71, Q175, G180, G218, and 237-240 (QMGT) each bind FMN.

This sequence belongs to the nitronate monooxygenase family. NMO class I subfamily. The cofactor is FMN.

The catalysed reaction is 3 propionate 3-nitronate + 3 O2 + H2O = 3 3-oxopropanoate + 2 nitrate + nitrite + H2O2 + 3 H(+). Functionally, nitronate monooxygenase that uses molecular oxygen to catalyze the oxidative denitrification of alkyl nitronates. Acts on propionate 3-nitronate (P3N), the presumed physiological substrate. Probably functions in the detoxification of P3N, a metabolic poison produced by plants and fungi as a defense mechanism. In Staphylococcus aureus (strain MRSA252), this protein is Probable nitronate monooxygenase.